Consider the following 493-residue polypeptide: Probable cytosol aminopeptidase (493 aa).

Residues Lys-265 and Asp-270 each coordinate Mn(2+). Lys-277 is a catalytic residue. 3 residues coordinate Mn(2+): Asp-288, Asp-347, and Glu-349. Arg-351 is a catalytic residue.

It belongs to the peptidase M17 family. It depends on Mn(2+) as a cofactor.

It is found in the cytoplasm. The catalysed reaction is Release of an N-terminal amino acid, Xaa-|-Yaa-, in which Xaa is preferably Leu, but may be other amino acids including Pro although not Arg or Lys, and Yaa may be Pro. Amino acid amides and methyl esters are also readily hydrolyzed, but rates on arylamides are exceedingly low.. It catalyses the reaction Release of an N-terminal amino acid, preferentially leucine, but not glutamic or aspartic acids.. Functionally, presumably involved in the processing and regular turnover of intracellular proteins. Catalyzes the removal of unsubstituted N-terminal amino acids from various peptides. This chain is Probable cytosol aminopeptidase, found in Hydrogenovibrio crunogenus (strain DSM 25203 / XCL-2) (Thiomicrospira crunogena).